Consider the following 387-residue polypeptide: Major outer membrane porin (387 aa).

Positions 1–22 (MKKLLKSVLAFAVLGSASSLHA) are cleaved as a signal peptide.

This sequence belongs to the chlamydial porin (CP) (TC 1.B.2) family. In terms of assembly, part of a disulfide cross-linked outer membrane complex (COMC) composed of the major outer membrane porin (MOMP), the small cysteine-rich protein (OmcA) and the large cysteine-rich periplasmic protein (OmcB).

The protein localises to the cell outer membrane. Its function is as follows. In elementary bodies (EBs, the infectious stage, which is able to survive outside the host cell) provides the structural integrity of the outer envelope through disulfide cross-links with the small cysteine-rich protein and the large cysteine-rich periplasmic protein. It has been described in publications as the Sarkosyl-insoluble COMC (Chlamydia outer membrane complex), and serves as the functional equivalent of peptidoglycan. In terms of biological role, permits diffusion of specific solutes through the outer membrane. The chain is Major outer membrane porin (ompA) from Chlamydia muridarum (strain MoPn / Nigg).